The sequence spans 429 residues: Threonine synthase (429 aa).

Residue Lys-107 is modified to N6-(pyridoxal phosphate)lysine.

Belongs to the threonine synthase family. Pyridoxal 5'-phosphate serves as cofactor.

It carries out the reaction O-phospho-L-homoserine + H2O = L-threonine + phosphate. The protein operates within amino-acid biosynthesis; L-threonine biosynthesis; L-threonine from L-aspartate: step 5/5. In terms of biological role, catalyzes the gamma-elimination of phosphate from L-phosphohomoserine and the beta-addition of water to produce L-threonine. This Serratia marcescens protein is Threonine synthase (thrC).